The following is a 264-amino-acid chain: Rhamnosyltransferase WbbL (264 aa).

Belongs to the glycosyltransferase 2 family.

It functions in the pathway bacterial outer membrane biogenesis; lipopolysaccharide biosynthesis. Its function is as follows. Rhamnosyltransferase involved in lipopolysaccharide biosynthesis. In Escherichia coli (strain K12), this protein is Rhamnosyltransferase WbbL (wbbL).